Reading from the N-terminus, the 1380-residue chain is Respiration factor 2 (1380 aa).

C2H2-type zinc fingers lie at residues 151 to 173 (FLCP…QHSH) and 179 to 202 (YLCI…QKLH). The tract at residues 208 to 231 (TGDPRRMTPAPNSTSSFASKRRHS) is disordered. Ser-231 and Ser-322 each carry phosphoserine. Disordered stretches follow at residues 413 to 445 (NLNL…NSNN), 544 to 584 (SPKN…NIDP), 624 to 643 (SRSS…SLNH), and 652 to 688 (LNLS…KRRR). Low complexity predominate over residues 424–445 (QQQQQQQQQQNSTSSTIVNSNN). A Phosphoserine modification is found at Ser-544. A compositionally biased stretch (polar residues) spans 544–569 (SPKNPPTTVSDSSSTINFNPGTNNLL). Over residues 575 to 584 (PNDKDSNIDP) the composition is skewed to basic and acidic residues. Residues 624 to 634 (SRSSIPNKSPP) are compositionally biased toward low complexity. Ser-632 carries the post-translational modification Phosphoserine. The segment covering 652–681 (LNLSLNGSTDLPSTPQNQLKEPSYSDPISH) has biased composition (polar residues).

Belongs to the RSF2/TDA9 family.

Its subcellular location is the nucleus. Transcription factor that regulates expression of both nuclear and mitochondrial genes, and more specifically those required for glycerol-based growth and respiration. The polypeptide is Respiration factor 2 (RSF2) (Saccharomyces cerevisiae (strain ATCC 204508 / S288c) (Baker's yeast)).